Consider the following 143-residue polypeptide: Polyadenylate-binding protein-interacting protein 2 (143 aa).

Residues 11–21 carry the PAM2-like motif; that stretch reads TLNPNAPVFDP.

This chain is Polyadenylate-binding protein-interacting protein 2 (CID2), found in Arabidopsis thaliana (Mouse-ear cress).